Reading from the N-terminus, the 61-residue chain is Large ribosomal subunit protein uL30 (61 aa).

It belongs to the universal ribosomal protein uL30 family. In terms of assembly, part of the 50S ribosomal subunit.

The sequence is that of Large ribosomal subunit protein uL30 from Saccharophagus degradans (strain 2-40 / ATCC 43961 / DSM 17024).